The sequence spans 122 residues: Protein FAM223B (122 aa).

It belongs to the FAM223 family.

The chain is Protein FAM223B (FAM223B) from Homo sapiens (Human).